Here is a 272-residue protein sequence, read N- to C-terminus: 1,4-dihydroxy-2-naphthoyl-CoA synthase (272 aa).

Substrate-binding positions include Arg-33, 72–76 (SGGDQ), Tyr-84, 116–120 (YAIGG), Thr-142, Ser-148, Tyr-245, and Lys-260. Hydrogencarbonate is bound at residue 141–143 (QTG).

Belongs to the enoyl-CoA hydratase/isomerase family. MenB subfamily. Hydrogencarbonate serves as cofactor.

It catalyses the reaction 2-succinylbenzoyl-CoA + H(+) = 1,4-dihydroxy-2-naphthoyl-CoA + H2O. Its pathway is quinol/quinone metabolism; 1,4-dihydroxy-2-naphthoate biosynthesis; 1,4-dihydroxy-2-naphthoate from chorismate: step 6/7. It participates in quinol/quinone metabolism; menaquinone biosynthesis. Functionally, converts o-succinylbenzoyl-CoA (OSB-CoA) to 1,4-dihydroxy-2-naphthoyl-CoA (DHNA-CoA). The polypeptide is 1,4-dihydroxy-2-naphthoyl-CoA synthase (Staphylococcus epidermidis (strain ATCC 35984 / DSM 28319 / BCRC 17069 / CCUG 31568 / BM 3577 / RP62A)).